We begin with the raw amino-acid sequence, 264 residues long: Low molecular mass lipoprotein PBMHPC-23 (264 aa).

The N-terminal stretch at 1-23 (MKFLVVFAVVRACVTPACAEMSA) is a signal peptide.

It belongs to the 30 kDa lipoprotein family.

Its subcellular location is the secreted. The polypeptide is Low molecular mass lipoprotein PBMHPC-23 (Bombyx mori (Silk moth)).